A 222-amino-acid chain; its full sequence is ATP-dependent dethiobiotin synthetase BioD (222 aa).

Residue 12-17 coordinates ATP; sequence DVGKTF. Mg(2+) is bound at residue threonine 16. Residue lysine 37 is part of the active site. A substrate-binding site is contributed by serine 41. ATP-binding positions include aspartate 54 and 113–116; that span reads EGAG. Positions 54 and 113 each coordinate Mg(2+).

It belongs to the dethiobiotin synthetase family. Homodimer. It depends on Mg(2+) as a cofactor.

It is found in the cytoplasm. It catalyses the reaction (7R,8S)-7,8-diammoniononanoate + CO2 + ATP = (4R,5S)-dethiobiotin + ADP + phosphate + 3 H(+). The protein operates within cofactor biosynthesis; biotin biosynthesis; biotin from 7,8-diaminononanoate: step 1/2. In terms of biological role, catalyzes a mechanistically unusual reaction, the ATP-dependent insertion of CO2 between the N7 and N8 nitrogen atoms of 7,8-diaminopelargonic acid (DAPA, also called 7,8-diammoniononanoate) to form a ureido ring. This chain is ATP-dependent dethiobiotin synthetase BioD, found in Anoxybacillus flavithermus (strain DSM 21510 / WK1).